A 197-amino-acid chain; its full sequence is CASP-like protein 1B2 (197 aa).

Alanine 2 carries the post-translational modification N-acetylalanine. Residues 2–17 lie on the Cytoplasmic side of the membrane; that stretch reads AREKIVVAGGTTKSWK. Residues 18–38 traverse the membrane as a helical segment; the sequence is LLLGLRIFAFMATLAAAIVMS. Topologically, residues 39-69 are extracellular; it reads LNKETKTLVVATIGTVPIKATLTAKFQHTPA. The chain crosses the membrane as a helical span at residues 70–90; sequence FVFFVIANVMVSFHNLLMIVV. Residues 91–106 lie on the Cytoplasmic side of the membrane; it reads QIFSRKLEYKGLRLLS. A helical membrane pass occupies residues 107 to 127; sequence IAILDMLNATLVSAAANAAVF. Residues 128–156 are Extracellular-facing; the sequence is VAELGKNGNKHAKWNKVCDRFTTYCDHGA. The chain crosses the membrane as a helical span at residues 157–177; the sequence is GAIIAAFAGVILMLLVSAVSI. The Cytoplasmic segment spans residues 178-197; that stretch reads SRLLINSKNFSTTATTTSVV.

Belongs to the Casparian strip membrane proteins (CASP) family. Homodimer and heterodimers.

It is found in the cell membrane. The sequence is that of CASP-like protein 1B2 from Arabidopsis thaliana (Mouse-ear cress).